A 403-amino-acid chain; its full sequence is Argininosuccinate synthase 1 (403 aa).

ATP contacts are provided by residues serine 10–serine 18 and alanine 37. The L-citrulline site is built by tyrosine 88 and serine 93. ATP is bound at residue glycine 118. Residues threonine 120, asparagine 124, and aspartate 125 each coordinate L-aspartate. L-citrulline is bound at residue asparagine 124. Arginine 128, serine 179, serine 188, glutamate 264, and tyrosine 276 together coordinate L-citrulline.

This sequence belongs to the argininosuccinate synthase family. Type 1 subfamily. In terms of assembly, homotetramer.

The protein resides in the cytoplasm. The enzyme catalyses L-citrulline + L-aspartate + ATP = 2-(N(omega)-L-arginino)succinate + AMP + diphosphate + H(+). The protein operates within amino-acid biosynthesis; L-arginine biosynthesis; L-arginine from L-ornithine and carbamoyl phosphate: step 2/3. The chain is Argininosuccinate synthase 1 from Rhizobium johnstonii (strain DSM 114642 / LMG 32736 / 3841) (Rhizobium leguminosarum bv. viciae).